The sequence spans 332 residues: 2,3-diketo-L-gulonate reductase (332 aa).

The active-site Proton donor is the H44. NAD(+)-binding positions include 168-174 (ITMVDMS), 224-225 (WK), and 304-306 (GHE).

Belongs to the LDH2/MDH2 oxidoreductase family. DlgD subfamily. Homodimer.

The protein localises to the cytoplasm. It catalyses the reaction 3-dehydro-L-gulonate + NAD(+) = 2,3-dioxo-L-gulonate + NADH + H(+). It carries out the reaction 3-dehydro-L-gulonate + NADP(+) = 2,3-dioxo-L-gulonate + NADPH + H(+). Catalyzes the reduction of 2,3-diketo-L-gulonate in the presence of NADH, to form 3-keto-L-gulonate. The chain is 2,3-diketo-L-gulonate reductase from Escherichia coli (strain SMS-3-5 / SECEC).